Reading from the N-terminus, the 426-residue chain is 4-hydroxy-3-methylbut-2-en-1-yl diphosphate synthase (flavodoxin) (426 aa).

The interval 1–20 (MLDRDLTLSDDAYESSPVSR) is disordered. Cys320, Cys323, Cys366, and Glu373 together coordinate [4Fe-4S] cluster.

The protein belongs to the IspG family. It depends on [4Fe-4S] cluster as a cofactor.

The catalysed reaction is (2E)-4-hydroxy-3-methylbut-2-enyl diphosphate + oxidized [flavodoxin] + H2O + 2 H(+) = 2-C-methyl-D-erythritol 2,4-cyclic diphosphate + reduced [flavodoxin]. It participates in isoprenoid biosynthesis; isopentenyl diphosphate biosynthesis via DXP pathway; isopentenyl diphosphate from 1-deoxy-D-xylulose 5-phosphate: step 5/6. Its function is as follows. Converts 2C-methyl-D-erythritol 2,4-cyclodiphosphate (ME-2,4cPP) into 1-hydroxy-2-methyl-2-(E)-butenyl 4-diphosphate. In Wolbachia pipientis subsp. Culex pipiens (strain wPip), this protein is 4-hydroxy-3-methylbut-2-en-1-yl diphosphate synthase (flavodoxin).